The chain runs to 340 residues: DNA repair protein RAD51 homolog A (340 aa).

Residues 1–14 (MSSAAQQQQKAAAA) are compositionally biased toward low complexity. The segment at 1 to 21 (MSSAAQQQQKAAAAEQEEVEH) is disordered. A HhH domain is found at 49–78 (TVEAVAYTPRKDLLQIKGISEAKADKIIEA). ATP is bound at residue 128 to 135 (GEFRSGKT).

The protein belongs to the RecA family. RAD51 subfamily. In terms of assembly, self-associates and may interact with XRCC3 homolog. In terms of tissue distribution, highly expressed in mitotic and meiotic tissues, but low levels in differentiated tissues.

The protein resides in the nucleus. Its function is as follows. Binds to single and double-stranded DNA and exhibits DNA-dependent ATPase activity. Unwinds duplex DNA. Component of the meiotic recombination pathway. Seems to play a role in mediating chromosome homology search, chromosome pairing and synapsis at early stages and probably chromosome crossing-over at later stages in meiosis. Probably is involved in the repair of meiotic double strand breaks (DBSs) and in homologous recombination. The sequence is that of DNA repair protein RAD51 homolog A (RAD51A) from Zea mays (Maize).